The primary structure comprises 245 residues: Ribonuclease 3 (245 aa).

In terms of domain architecture, RNase III spans 17–146; the sequence is FTDKMKSLGL…FVGALYLDQG (130 aa). Glutamate 59 lines the Mg(2+) pocket. Aspartate 63 is an active-site residue. Mg(2+) contacts are provided by aspartate 132 and glutamate 135. The active site involves glutamate 135. The region spanning 172–241 is the DRBM domain; the sequence is DFKTQFQEYV…AEQAYKLMKN (70 aa).

It belongs to the ribonuclease III family. In terms of assembly, homodimer. Requires Mg(2+) as cofactor.

The protein localises to the cytoplasm. The catalysed reaction is Endonucleolytic cleavage to 5'-phosphomonoester.. Digests double-stranded RNA. Involved in the processing of primary rRNA transcript to yield the immediate precursors to the large and small rRNAs (23S and 16S). Processes some mRNAs, and tRNAs when they are encoded in the rRNA operon. Processes pre-crRNA and tracrRNA of type II CRISPR loci if present in the organism. The polypeptide is Ribonuclease 3 (Staphylococcus epidermidis (strain ATCC 35984 / DSM 28319 / BCRC 17069 / CCUG 31568 / BM 3577 / RP62A)).